We begin with the raw amino-acid sequence, 417 residues long: Gamma-glutamyl phosphate reductase (417 aa).

Belongs to the gamma-glutamyl phosphate reductase family.

It is found in the cytoplasm. The catalysed reaction is L-glutamate 5-semialdehyde + phosphate + NADP(+) = L-glutamyl 5-phosphate + NADPH + H(+). It functions in the pathway amino-acid biosynthesis; L-proline biosynthesis; L-glutamate 5-semialdehyde from L-glutamate: step 2/2. In terms of biological role, catalyzes the NADPH-dependent reduction of L-glutamate 5-phosphate into L-glutamate 5-semialdehyde and phosphate. The product spontaneously undergoes cyclization to form 1-pyrroline-5-carboxylate. This Shigella boydii serotype 18 (strain CDC 3083-94 / BS512) protein is Gamma-glutamyl phosphate reductase.